We begin with the raw amino-acid sequence, 314 residues long: Olfactory receptor 14K1 (314 aa).

Residues 1-23 (MTNQTQMMEFLLVRFTENWVLLR) lie on the Extracellular side of the membrane. Residue asparagine 3 is glycosylated (N-linked (GlcNAc...) asparagine). The chain crosses the membrane as a helical span at residues 24–44 (LHALLFSLIYLTAVLMNLVII). Topologically, residues 45–52 (LLMILDHR) are cytoplasmic. The chain crosses the membrane as a helical span at residues 53-73 (LHMAMYFFLRHLSFLDLCLIS). Over 74–97 (ATVPKSILNSVASTDSISFLGCVL) the chain is Extracellular. A disulfide bridge connects residues cysteine 95 and cysteine 187. A helical transmembrane segment spans residues 98-118 (QLFLVVLLAGSEIGILTAMSY). At 119–131 (DRYAAICCPLHCE) the chain is on the cytoplasmic side. Residues 132–152 (AVMSRGLCVQLMALSWLNRGA) traverse the membrane as a helical segment. The Extracellular portion of the chain corresponds to 153 to 194 (LGLLYTAGTFSLNFYGSDELHQFFCDVPALLKLTCSKEHAII). Residues 195-215 (SVSVAIGVCYAFSCLVCIVVS) traverse the membrane as a helical segment. The Cytoplasmic portion of the chain corresponds to 216–235 (YVYIFSAVLRISQRQRQSKA). The chain crosses the membrane as a helical span at residues 236 to 256 (FSNCVPHLIVVTVFLVTGAVA). Topologically, residues 257–269 (YLKPGSDAPSILD) are extracellular. The helical transmembrane segment at 270–290 (LLVSVFYSVAPPTLNPVIYCL) threads the bilayer. Topologically, residues 291-314 (KNKDIKSALSKVLWNVRSSGVMKR) are cytoplasmic.

This sequence belongs to the G-protein coupled receptor 1 family.

The protein localises to the cell membrane. Functionally, odorant receptor. The chain is Olfactory receptor 14K1 (OR14K1) from Homo sapiens (Human).